The primary structure comprises 378 residues: Transaldolase 1 (378 aa).

K146 acts as the Schiff-base intermediate with substrate in catalysis.

It belongs to the transaldolase family. Type 2 subfamily.

It is found in the cytoplasm. The catalysed reaction is D-sedoheptulose 7-phosphate + D-glyceraldehyde 3-phosphate = D-erythrose 4-phosphate + beta-D-fructose 6-phosphate. Its pathway is carbohydrate degradation; pentose phosphate pathway; D-glyceraldehyde 3-phosphate and beta-D-fructose 6-phosphate from D-ribose 5-phosphate and D-xylulose 5-phosphate (non-oxidative stage): step 2/3. In terms of biological role, transaldolase is important for the balance of metabolites in the pentose-phosphate pathway. This Streptomyces avermitilis (strain ATCC 31267 / DSM 46492 / JCM 5070 / NBRC 14893 / NCIMB 12804 / NRRL 8165 / MA-4680) protein is Transaldolase 1.